The primary structure comprises 194 residues: MTNDDVLDEFRAAGALREGHFVLSSGLHSPVFLQKNLVFMRPERCERLCKALAQKIIATVGQVDVAVSPAVGGIIPGYETARHLNVPSIYVEREGGGFKFRRGFHLEPGQKVVMVEDIVTTGLSSRECIQAIKDAGGDVVAAACIVDRSGGKADVGVPLIALASLEVPAYPADALPPELAAIPIEDPGSRRLKG.

Residue 116-124 participates in 5-phospho-alpha-D-ribose 1-diphosphate binding; the sequence is EDIVTTGLS. Positions 120 and 148 each coordinate orotate.

Belongs to the purine/pyrimidine phosphoribosyltransferase family. PyrE subfamily. As to quaternary structure, homodimer. Requires Mg(2+) as cofactor.

The enzyme catalyses orotidine 5'-phosphate + diphosphate = orotate + 5-phospho-alpha-D-ribose 1-diphosphate. It participates in pyrimidine metabolism; UMP biosynthesis via de novo pathway; UMP from orotate: step 1/2. Its function is as follows. Catalyzes the transfer of a ribosyl phosphate group from 5-phosphoribose 1-diphosphate to orotate, leading to the formation of orotidine monophosphate (OMP). This Caulobacter vibrioides (strain ATCC 19089 / CIP 103742 / CB 15) (Caulobacter crescentus) protein is Orotate phosphoribosyltransferase.